Here is an 828-residue protein sequence, read N- to C-terminus: Auxin response factor 2B (828 aa).

The segment at residues 128–230 is a DNA-binding region (TF-B3); the sequence is FCKTLTASDT…ELRVGVRRAM (103 aa). Disordered stretches follow at residues 348–397, 681–703, and 791–828; these read PDRV…GSSK, EQFQ…HSTR, and NPGT…PEDS. Pro residues predominate over residues 360-370; that stretch reads LSPPALNPLPI. The span at 380-390 shows a compositional bias: polar residues; that stretch reads VLPSSPDSSVL. A PB1 domain is found at 703–786; sequence RSCTKVHKQG…RKIFIYTKDE (84 aa). Over residues 791-806 the composition is skewed to polar residues; it reads NPGTLNSKGEDNSSVA.

It belongs to the ARF family. As to quaternary structure, homodimers and heterodimers. In terms of tissue distribution, expressed in root, leaf and stem. Also expressed in flower and fruit. Expressed in flower buds about three days before opening including stamen, petal and sepal with the highest in ovary.

It is found in the nucleus. Functionally, auxin response factors (ARFs) are transcriptional factors that binds specifically to the DNA sequence 5'-TGTCTC-3' found in the auxin-responsive promoter elements (AuxREs). Could act as transcriptional activator or repressor. Involved in the control of fruit ripening process. Regulates expression of a number of ripening regulators, transcription factors, and ethylene biosynthesis and signaling components. May act as a transcriptional repressor of auxin-responsive genes. This chain is Auxin response factor 2B, found in Solanum lycopersicum (Tomato).